A 208-amino-acid polypeptide reads, in one-letter code: Large ribosomal subunit protein bL25 (208 aa).

Acidic residues predominate over residues 185–195 (DLEEETGEAEG). The disordered stretch occupies residues 185 to 208 (DLEEETGEAEGETAAAPAEEGAES). Residues 196 to 208 (ETAAAPAEEGAES) are compositionally biased toward low complexity.

The protein belongs to the bacterial ribosomal protein bL25 family. CTC subfamily. Part of the 50S ribosomal subunit; part of the 5S rRNA/L5/L18/L25 subcomplex. Contacts the 5S rRNA. Binds to the 5S rRNA independently of L5 and L18.

Functionally, this is one of the proteins that binds to the 5S RNA in the ribosome where it forms part of the central protuberance. The chain is Large ribosomal subunit protein bL25 from Rhodococcus opacus (strain B4).